Here is a 135-residue protein sequence, read N- to C-terminus: T-cell receptor gamma chain V region 5/10-13 (135 aa).

The signal sequence occupies residues 1 to 18; the sequence is MLLLRWPTFCCLWVFGLG. The tract at residues 19–114 is v segment; it reads QLEQTELSVT…DEATYYCAVC (96 aa). The segment at 115-135 is j segment; sequence RSGTSWVKIFAKGTKLVVIPP.

The sequence is that of T-cell receptor gamma chain V region 5/10-13 (Tcrg-V1) from Mus musculus (Mouse).